Consider the following 280-residue polypeptide: Cell division protein SepF (280 aa).

Residues 22–117 form a disordered region; that stretch reads DYVDDRAPRA…DDYPEDAYGE (96 aa). Composition is skewed to basic and acidic residues over residues 25–36 and 53–83; these read DDRAPRASERGG and RYGEDRYSADRFGPERFGAERFGPDRFGADR.

This sequence belongs to the SepF family. In terms of assembly, homodimer. Interacts with FtsZ.

The protein localises to the cytoplasm. Functionally, cell division protein that is part of the divisome complex and is recruited early to the Z-ring. Probably stimulates Z-ring formation, perhaps through the cross-linking of FtsZ protofilaments. Its function overlaps with FtsA. The sequence is that of Cell division protein SepF from Nocardia farcinica (strain IFM 10152).